A 474-amino-acid polypeptide reads, in one-letter code: Cysteine--tRNA ligase (474 aa).

Position 30 (Cys30) interacts with Zn(2+). The 'HIGH' region motif lies at 32 to 42 (PTVYNYAHIGN). Positions 215, 240, and 244 each coordinate Zn(2+). Positions 272 to 276 (KMSKS) match the 'KMSKS' region motif. Residue Lys275 participates in ATP binding.

It belongs to the class-I aminoacyl-tRNA synthetase family. In terms of assembly, monomer. The cofactor is Zn(2+).

The protein resides in the cytoplasm. It catalyses the reaction tRNA(Cys) + L-cysteine + ATP = L-cysteinyl-tRNA(Cys) + AMP + diphosphate. This chain is Cysteine--tRNA ligase, found in Brachyspira hyodysenteriae (strain ATCC 49526 / WA1).